Reading from the N-terminus, the 223-residue chain is PRA1 family protein B5 (223 aa).

The next 5 helical transmembrane spans lie at 83-103 (SSYF…FSLL), 105-125 (HPFS…LYLF), 146-166 (GGLI…SVLI), 170-190 (MIGI…DLFL), and 196-216 (AASG…APSA).

The protein belongs to the PRA1 family. Interacts with PRA1B1, PRA1B2, PRA1B3, PRA1B4, PRA1B6 and PRA1E. As to expression, expressed in roots, lateral roots, lateral root caps, columella cells, leaves, and shoot apex.

Its subcellular location is the endosome membrane. Its function is as follows. May be involved in both secretory and endocytic intracellular trafficking in the endosomal/prevacuolar compartments. The polypeptide is PRA1 family protein B5 (PRA1B5) (Arabidopsis thaliana (Mouse-ear cress)).